Reading from the N-terminus, the 86-residue chain is Large ribosomal subunit protein eL43 (86 aa).

Zn(2+)-binding residues include cysteine 38, cysteine 41, cysteine 57, and cysteine 60. The C4-type zinc finger occupies 38–60 (CPFCGSTGTVRRVSVGVWSCRKC).

Belongs to the eukaryotic ribosomal protein eL43 family. Putative zinc-binding subfamily. Part of the 50S ribosomal subunit. The cofactor is Zn(2+).

Its function is as follows. Binds to the 23S rRNA. The protein is Large ribosomal subunit protein eL43 of Aeropyrum pernix (strain ATCC 700893 / DSM 11879 / JCM 9820 / NBRC 100138 / K1).